We begin with the raw amino-acid sequence, 246 residues long: Ly6/PLAUR domain-containing protein 4 (246 aa).

Residues 1 to 26 (MILQAWRSLQLLYLLEAISLLPCTEA) form the signal peptide. Residue N117 is glycosylated (N-linked (GlcNAc...) asparagine). The region spanning 142–223 (CPSCVGKHDQ…INVLDKSEAV (82 aa)) is the UPAR/Ly6 domain. A225 is lipidated: GPI-anchor amidated alanine. The propeptide at 226 to 246 (GHCSQGISWSVLLCLLILLRD) is removed in mature form.

It localises to the cell membrane. This is Ly6/PLAUR domain-containing protein 4 (Lypd4) from Mus musculus (Mouse).